A 377-amino-acid chain; its full sequence is ATP synthase gamma chain, chloroplastic (377 aa).

Residues Met1–Cys55 constitute a chloroplast transit peptide. The tract at residues Pro30–Pro52 is disordered. Over residues Asn37–Pro52 the composition is skewed to low complexity. Cys143 is an active-site residue. Cysteines 253 and 259 form a disulfide.

This sequence belongs to the ATPase gamma chain family. As to quaternary structure, F-type ATPases have 2 components, CF(1) - the catalytic core - and CF(0) - the membrane proton channel. CF(1) has five subunits: alpha(3), beta(3), gamma(1), delta(1), epsilon(1). CF(0) has four main subunits: a, b, b' and c.

It localises to the plastid. It is found in the chloroplast thylakoid membrane. Produces ATP from ADP in the presence of a proton gradient across the membrane. The gamma chain is believed to be important in regulating ATPase activity and the flow of protons through the CF(0) complex. The chain is ATP synthase gamma chain, chloroplastic (ATPC) from Nicotiana tabacum (Common tobacco).